The following is a 359-amino-acid chain: EGF-like domain containing protein 2 (359 aa).

A signal peptide spans 1-20; the sequence is MPPFISHFFLLSTFASLALC. EGF-like domains lie at 21-55 and 61-93; these read SFYC…FNCG and ISAA…PTCQ. 6 disulfide bridges follow: cysteine 24/cysteine 37, cysteine 31/cysteine 43, cysteine 45/cysteine 54, cysteine 65/cysteine 75, cysteine 69/cysteine 81, and cysteine 83/cysteine 92.

In terms of tissue distribution, prismatic layer of shell (at protein level). Expressed primarily in the mantle with highest level in the mantle edge and lower level in the mantle pallium.

Its subcellular location is the secreted. This is EGF-like domain containing protein 2 from Margaritifera margaritifera (Freshwater pearl mussel).